The primary structure comprises 365 residues: Phospho-N-acetylmuramoyl-pentapeptide-transferase (365 aa).

10 helical membrane-spanning segments follow: residues 22–42 (YISVRIIMISITSLLITLALG), 74–94 (TMGGVLILSSVIISCLLWGDL), 95–115 (TSIYLWILILVVIFFGAIGFF), 133–153 (YKFALQSIFSIVLAIVLFYLL), 168–188 (SLYIPMGIVIFVVLAFFIING), 201–221 (GLAIVPVVLVAAGLGIYAYIE), 240–260 (LAEVAVFCAAVCGSGLAFLWF), 267–287 (VFMGDVGSLTLGAVLGVIAVM), 292–312 (LIFFIMGLLFVVEALSVMLQV), and 342–362 (KVVIRFWIISLILFLIGLAAI).

It belongs to the glycosyltransferase 4 family. MraY subfamily. Mg(2+) serves as cofactor.

It localises to the cell inner membrane. The catalysed reaction is UDP-N-acetyl-alpha-D-muramoyl-L-alanyl-gamma-D-glutamyl-meso-2,6-diaminopimeloyl-D-alanyl-D-alanine + di-trans,octa-cis-undecaprenyl phosphate = di-trans,octa-cis-undecaprenyl diphospho-N-acetyl-alpha-D-muramoyl-L-alanyl-D-glutamyl-meso-2,6-diaminopimeloyl-D-alanyl-D-alanine + UMP. It functions in the pathway cell wall biogenesis; peptidoglycan biosynthesis. In terms of biological role, catalyzes the initial step of the lipid cycle reactions in the biosynthesis of the cell wall peptidoglycan: transfers peptidoglycan precursor phospho-MurNAc-pentapeptide from UDP-MurNAc-pentapeptide onto the lipid carrier undecaprenyl phosphate, yielding undecaprenyl-pyrophosphoryl-MurNAc-pentapeptide, known as lipid I. This chain is Phospho-N-acetylmuramoyl-pentapeptide-transferase, found in Francisella tularensis subsp. tularensis (strain WY96-3418).